The primary structure comprises 91 residues: Insertion element IS1 2 protein InsA (91 aa).

This sequence belongs to the IS1 elements InsA family.

Functionally, absolutely required for transposition of IS1. The polypeptide is Insertion element IS1 2 protein InsA (insA2) (Escherichia coli (strain K12)).